The primary structure comprises 504 residues: Cytochrome P450 2D9 (504 aa).

Phosphoserine is present on S249. Residue C446 coordinates heme.

This sequence belongs to the cytochrome P450 family. Heme is required as a cofactor.

It is found in the endoplasmic reticulum membrane. Its subcellular location is the microsome membrane. It catalyses the reaction an organic molecule + reduced [NADPH--hemoprotein reductase] + O2 = an alcohol + oxidized [NADPH--hemoprotein reductase] + H2O + H(+). In terms of biological role, cytochromes P450 are a group of heme-thiolate monooxygenases. In liver microsomes, this enzyme is involved in an NADPH-dependent electron transport pathway. It oxidizes a variety of structurally unrelated compounds, including steroids, fatty acids, and xenobiotics. The chain is Cytochrome P450 2D9 (Cyp2d9) from Mus musculus (Mouse).